A 145-amino-acid chain; its full sequence is Peptide methionine sulfoxide reductase MsrB (145 aa).

A MsrB domain is found at 6 to 129; it reads KNERLQQLTD…NSAALRFIPV (124 aa). Catalysis depends on C118, which acts as the Nucleophile.

This sequence belongs to the MsrB Met sulfoxide reductase family.

It catalyses the reaction L-methionyl-[protein] + [thioredoxin]-disulfide + H2O = L-methionyl-(R)-S-oxide-[protein] + [thioredoxin]-dithiol. The chain is Peptide methionine sulfoxide reductase MsrB from Listeria monocytogenes serovar 1/2a (strain ATCC BAA-679 / EGD-e).